Consider the following 188-residue polypeptide: GTP cyclohydrolase 1 (188 aa).

Residues Cys78, His81, and Cys150 each coordinate Zn(2+).

It belongs to the GTP cyclohydrolase I family. Homomer.

The catalysed reaction is GTP + H2O = 7,8-dihydroneopterin 3'-triphosphate + formate + H(+). Its pathway is cofactor biosynthesis; 7,8-dihydroneopterin triphosphate biosynthesis; 7,8-dihydroneopterin triphosphate from GTP: step 1/1. The protein is GTP cyclohydrolase 1 of Geobacillus sp. (strain WCH70).